The sequence spans 62 residues: NRWYCNSAAGGVGGAAVCGLAGYVGEAKENIAGEVRKGWGMAGGFTHNKACKSFPGSGWASG.

The protein resides in the secreted. Its function is as follows. Bacteriocin active against the Gram-negative bacteria S.enteritidis, S.choleraesuis, S.typhimurium, S.gallinarum, E.coli O157:H7, Y.enterocolitica, C.freundii, K.pneumoniae, S.dysentriae, P.aeruginosa, P.mirabilis, M.morganii, C.jejuni and 20 other Campylobacter isolates, and the Gram-positive bacteria S.aureus, S.epidermidis and L.monocytogenes. In Enterococcus sp, this protein is Enterocin E-760.